The following is a 405-amino-acid chain: MKSSIDILPDGSITTPKGFKAGAIYAGIKKKSKNNLDLAILYSDTPCIAAGIFTTNKFRAAPVYISEHNLGFTDNRAIVVNSGCANAGTGEAGMADAIEMVKATAESLNMQPKDVLIASTGVIGHRLPIDKIKENVRLIGLSQRNGHEFARAIMTTDTRSKEIAVQVNIEGFQFYIAGAAKGAGMIHPNMATMLGFITTDASVSKEFLQFALKEAADVSFNMITVDGDTSTNDSLFMLSNGQAENPTFAGNTEYSLVFQQALTIVCQNLAKSIARDGEGAKRLIEIQVEGAANLEDARLIARVIAGSPLVKTAVHGADPNWGRILAAAGRAGADFDIDMVDLYLGESPVLLKGARTGVDEKELSSWLRQVEVIIKLNLNLGQGKAAAWGCDLSAEYVKINADYTT.

6 residues coordinate substrate: Thr-155, Lys-181, Thr-192, Glu-278, Asn-400, and Thr-405. Thr-192 acts as the Nucleophile in catalysis.

This sequence belongs to the ArgJ family. In terms of assembly, heterotetramer of two alpha and two beta chains.

It is found in the cytoplasm. It carries out the reaction N(2)-acetyl-L-ornithine + L-glutamate = N-acetyl-L-glutamate + L-ornithine. The catalysed reaction is L-glutamate + acetyl-CoA = N-acetyl-L-glutamate + CoA + H(+). It functions in the pathway amino-acid biosynthesis; L-arginine biosynthesis; L-ornithine and N-acetyl-L-glutamate from L-glutamate and N(2)-acetyl-L-ornithine (cyclic): step 1/1. It participates in amino-acid biosynthesis; L-arginine biosynthesis; N(2)-acetyl-L-ornithine from L-glutamate: step 1/4. In terms of biological role, catalyzes two activities which are involved in the cyclic version of arginine biosynthesis: the synthesis of N-acetylglutamate from glutamate and acetyl-CoA as the acetyl donor, and of ornithine by transacetylation between N(2)-acetylornithine and glutamate. This chain is Arginine biosynthesis bifunctional protein ArgJ, found in Dehalococcoides mccartyi (strain CBDB1).